A 107-amino-acid polypeptide reads, in one-letter code: MSISLTESAAQRIVAFLDNRGKGVGLRLGVRTSGCSGMAYVLEFADVVNEEDQVFEDKGVKVIVDGKSILYLDGTELDFVKEGLNEGFKFNNPNVSSECGCGESFHV.

Cys-35, Cys-99, and Cys-101 together coordinate Fe cation.

It belongs to the HesB/IscA family. As to quaternary structure, homodimer; may form tetramers and higher multimers. The cofactor is Fe cation.

Functionally, is able to transfer iron-sulfur clusters to apo-ferredoxin. Multiple cycles of [2Fe2S] cluster formation and transfer are observed, suggesting that IscA acts catalytically. Recruits intracellular free iron so as to provide iron for the assembly of transient iron-sulfur cluster in IscU in the presence of IscS, L-cysteine and the thioredoxin reductase system TrxA/TrxB. The protein is Iron-binding protein IscA of Xenorhabdus nematophila (strain ATCC 19061 / DSM 3370 / CCUG 14189 / LMG 1036 / NCIMB 9965 / AN6).